Consider the following 183-residue polypeptide: Threonylcarbamoyl-AMP synthase (183 aa).

The region spanning 1 to 183 (MNIQQIVEQL…LFTHQLFRQG (183 aa)) is the YrdC-like domain.

The protein belongs to the SUA5 family. TsaC subfamily.

It localises to the cytoplasm. The catalysed reaction is L-threonine + hydrogencarbonate + ATP = L-threonylcarbamoyladenylate + diphosphate + H2O. Required for the formation of a threonylcarbamoyl group on adenosine at position 37 (t(6)A37) in tRNAs that read codons beginning with adenine. Catalyzes the conversion of L-threonine, HCO(3)(-)/CO(2) and ATP to give threonylcarbamoyl-AMP (TC-AMP) as the acyladenylate intermediate, with the release of diphosphate. This Pasteurella multocida (strain Pm70) protein is Threonylcarbamoyl-AMP synthase.